Consider the following 347-residue polypeptide: Phenylalanine--tRNA ligase alpha subunit (347 aa).

E265 serves as a coordination point for Mg(2+).

It belongs to the class-II aminoacyl-tRNA synthetase family. Phe-tRNA synthetase alpha subunit type 1 subfamily. As to quaternary structure, tetramer of two alpha and two beta subunits. The cofactor is Mg(2+).

The protein resides in the cytoplasm. The catalysed reaction is tRNA(Phe) + L-phenylalanine + ATP = L-phenylalanyl-tRNA(Phe) + AMP + diphosphate + H(+). This is Phenylalanine--tRNA ligase alpha subunit from Wolbachia pipientis subsp. Culex pipiens (strain wPip).